We begin with the raw amino-acid sequence, 261 residues long: Cytochrome c oxidase subunit 3 (261 aa).

Residues 1–15 (MAHQAHAYHMVDPSP) are Mitochondrial matrix-facing. The helical transmembrane segment at 16-34 (WPLTGAIAALLLTSGTAVW) threads the bilayer. At 35–40 (FHFHSL) the chain is on the mitochondrial intermembrane side. A helical membrane pass occupies residues 41–66 (TLLTLGNILLLLTMYQWWRDIIREGT). Over 67–72 (FQGHHT) the chain is Mitochondrial matrix. Residues 73–105 (PPVQKGLRYGMILFITSEVFFFLGFFWAFYHAS) traverse the membrane as a helical segment. Over 106–128 (LAPTPELGGCWPPAGITTLDPFE) the chain is Mitochondrial intermembrane. A helical membrane pass occupies residues 129 to 152 (VPLLNTAVLLASGVTVTWAHHSIM). Over 153 to 155 (EGE) the chain is Mitochondrial matrix. Residues 156–183 (RKQTIQALTLTILLGFYFTFLQGMEYYE) form a helical membrane-spanning segment. At 184 to 190 (APFTIAD) the chain is on the mitochondrial intermembrane side. The helical transmembrane segment at 191–223 (GVYGSTFFVATGFHGLHVIIGSTFLAVCLLRQV) threads the bilayer. Topologically, residues 224-232 (QYHFTSEHH) are mitochondrial matrix. Residues 233 to 256 (FGFEAAAWYWHFVDVVWLFLYVSI) form a helical membrane-spanning segment. Residues 257–261 (YWWGS) lie on the Mitochondrial intermembrane side of the membrane.

Belongs to the cytochrome c oxidase subunit 3 family. In terms of assembly, component of the cytochrome c oxidase (complex IV, CIV), a multisubunit enzyme composed of 14 subunits. The complex is composed of a catalytic core of 3 subunits MT-CO1, MT-CO2 and MT-CO3, encoded in the mitochondrial DNA, and 11 supernumerary subunits COX4I, COX5A, COX5B, COX6A, COX6B, COX6C, COX7A, COX7B, COX7C, COX8 and NDUFA4, which are encoded in the nuclear genome. The complex exists as a monomer or a dimer and forms supercomplexes (SCs) in the inner mitochondrial membrane with NADH-ubiquinone oxidoreductase (complex I, CI) and ubiquinol-cytochrome c oxidoreductase (cytochrome b-c1 complex, complex III, CIII), resulting in different assemblies (supercomplex SCI(1)III(2)IV(1) and megacomplex MCI(2)III(2)IV(2)).

It is found in the mitochondrion inner membrane. The catalysed reaction is 4 Fe(II)-[cytochrome c] + O2 + 8 H(+)(in) = 4 Fe(III)-[cytochrome c] + 2 H2O + 4 H(+)(out). Its function is as follows. Component of the cytochrome c oxidase, the last enzyme in the mitochondrial electron transport chain which drives oxidative phosphorylation. The respiratory chain contains 3 multisubunit complexes succinate dehydrogenase (complex II, CII), ubiquinol-cytochrome c oxidoreductase (cytochrome b-c1 complex, complex III, CIII) and cytochrome c oxidase (complex IV, CIV), that cooperate to transfer electrons derived from NADH and succinate to molecular oxygen, creating an electrochemical gradient over the inner membrane that drives transmembrane transport and the ATP synthase. Cytochrome c oxidase is the component of the respiratory chain that catalyzes the reduction of oxygen to water. Electrons originating from reduced cytochrome c in the intermembrane space (IMS) are transferred via the dinuclear copper A center (CU(A)) of subunit 2 and heme A of subunit 1 to the active site in subunit 1, a binuclear center (BNC) formed by heme A3 and copper B (CU(B)). The BNC reduces molecular oxygen to 2 water molecules using 4 electrons from cytochrome c in the IMS and 4 protons from the mitochondrial matrix. The sequence is that of Cytochrome c oxidase subunit 3 (mt-co3) from Oncorhynchus mykiss (Rainbow trout).